The chain runs to 360 residues: MAGNSIGQLFRVTTFGESHGIALGCIVDGVPPNMALSEADIQPDLDRRKPGTSRYTTARREADEIQILSGVFEGKTTGTSIGLIIKNADQRSKDYGDIMDKFRPGHADYTYQQKYGIRDYRGGGRSSARETAMRVAAGAIAKKYLRERFGIEIRGYLSQIGEVKIDPQTVADVTKINWQQVADNPFFCPDKSAVEKFDELIRKLKKEGNSIGAKLTVVAENVPVGLGEPVFDRLDAELAHALMGINAVKAVEIGDGFDVVAQKGTEHRDEMTPAGFLSNHAGGILGGISNGQPIIATIALKPTSSITIPGRTVDINNKPVELITKGRHDPCVGIRAVPIAEAMVAIILLDHLLRFKAQCK.

Residues R48 and R54 each coordinate NADP(+). FMN contacts are provided by residues 125–127 (RSS), 246–247 (NA), G286, 301–305 (KPTSS), and R327.

This sequence belongs to the chorismate synthase family. Homotetramer. The cofactor is FMNH2.

The catalysed reaction is 5-O-(1-carboxyvinyl)-3-phosphoshikimate = chorismate + phosphate. Its pathway is metabolic intermediate biosynthesis; chorismate biosynthesis; chorismate from D-erythrose 4-phosphate and phosphoenolpyruvate: step 7/7. Its function is as follows. Catalyzes the anti-1,4-elimination of the C-3 phosphate and the C-6 proR hydrogen from 5-enolpyruvylshikimate-3-phosphate (EPSP) to yield chorismate, which is the branch point compound that serves as the starting substrate for the three terminal pathways of aromatic amino acid biosynthesis. This reaction introduces a second double bond into the aromatic ring system. The polypeptide is Chorismate synthase (Actinobacillus succinogenes (strain ATCC 55618 / DSM 22257 / CCUG 43843 / 130Z)).